The chain runs to 278 residues: Protein lyl-1 (278 aa).

The tract at residues 1-46 is disordered; sequence MCPPQARAEVGSAMTEKTEMVCASSPAPAPPSKPASPGPLSTEEVD. Residues 27–37 show a composition bias toward pro residues; the sequence is APAPPSKPASP. A bHLH domain is found at 149-201; that stretch reads ARRVFTNSRERWRQQHVNGAFAELRKLLPTHPPDRKLSKNEVLRLAMKYIGFL. Positions 212–278 are disordered; the sequence is LTSGPSAPGS…EQTSLSPEVR (67 aa). Residues 269 to 278 are compositionally biased toward polar residues; it reads EQTSLSPEVR. The residue at position 274 (serine 274) is a Phosphoserine.

In terms of assembly, efficient DNA binding requires dimerization with another bHLH protein.

Its subcellular location is the nucleus. The polypeptide is Protein lyl-1 (Lyl1) (Mus musculus (Mouse)).